Reading from the N-terminus, the 257-residue chain is MDVIPAIDLLEGRCVRLYQGDYDRSQVFSENPVDVAKQWVDEGATRLHIVDLDGAKAGKVVNLGAIEAIAQAISIPIEIGGGLRDRSSVEQVFNLGVQWAILGTVAVEQPQLVQELCQQYPGQIIIGIDARNGLVATRGWLETSEVLATQLAVQMQEMGAAAIIYTDIHRDGTLAGPNLDALRELAAAISIPVIASGGVSSVTDLLSLLALEPQGVTGVIVGRALYTGDINLKEALQAIGPGRIQDIPPNLDFSSFA.

Asp8 (proton acceptor) is an active-site residue. Asp129 acts as the Proton donor in catalysis.

The protein belongs to the HisA/HisF family.

It is found in the cytoplasm. It catalyses the reaction 1-(5-phospho-beta-D-ribosyl)-5-[(5-phospho-beta-D-ribosylamino)methylideneamino]imidazole-4-carboxamide = 5-[(5-phospho-1-deoxy-D-ribulos-1-ylimino)methylamino]-1-(5-phospho-beta-D-ribosyl)imidazole-4-carboxamide. It functions in the pathway amino-acid biosynthesis; L-histidine biosynthesis; L-histidine from 5-phospho-alpha-D-ribose 1-diphosphate: step 4/9. The polypeptide is 1-(5-phosphoribosyl)-5-[(5-phosphoribosylamino)methylideneamino] imidazole-4-carboxamide isomerase (Trichormus variabilis (strain ATCC 29413 / PCC 7937) (Anabaena variabilis)).